The chain runs to 660 residues: MSSIESFKQEGRVFDSPVDFVNNAAISGMEAYRALCAEAADDYEGFWARLAQQNLHWTKPFTKKLDESNAPFYKWFEDGELNVSWNCLDRHLHNGNADKVAIIFEADDGNVTRITYKELHERVCKFANGLKSLSINKGDRVIIYMPMSIDGIAAMQACARIGATHSVVFGGFSAKSLHERIIDAGAVAVLTADYQVRGGKNLPLKAIVDEALAMGGCDTIRNVVVYKRTGGAVDFVERRDIWLHELVEQRTSECAPEPVGAEHPLFILYTSGSTGKPKGVQHSSAGYLLWAMLTMKWVFDIKPNDVYWCTADIGWVTGHTYVTYGPLAVGATQIVFEGVPMYPNAGRFWEMVQKHKVSIFYTAPTAIRSLIKAAEADPSTHPSKYDLSSLRLLGSVGEPINPEAWMWYYKNIGGERCPIVDTFWQTETGGHVISPLPGATPMVPGSCTLPLPGIIAAVVDDGGHDLPNGKGGLLVIKRPWPAMIRNIWNDPERFEKSYFPHELGGRTYLAGDGAIRNEETGYFTITGRIDDVLNISGHRMGTAEIESALVANPMVAEAAVVGKPDETTGESICAFVVLKRVRPEGDEAKQIAKELRDWVAKEIGPIAKPKEIRFGDNLPKTRSGKIMRRLLRVLAKDEDITQDISTLENPAILEQLKQAQ.

CoA-binding positions include 197-200 (RGGK) and threonine 317. ATP is bound by residues 397–399 (GEP), 421–426 (DTFWQT), aspartate 512, and arginine 528. Serine 536 is a binding site for CoA. Position 539 (arginine 539) interacts with ATP. Mg(2+) contacts are provided by valine 550 and valine 555. Lysine 625 is modified (N6-acetyllysine).

It belongs to the ATP-dependent AMP-binding enzyme family. Mg(2+) is required as a cofactor. Post-translationally, acetylated. Deacetylation by the SIR2-homolog deacetylase activates the enzyme.

It carries out the reaction acetate + ATP + CoA = acetyl-CoA + AMP + diphosphate. Functionally, catalyzes the conversion of acetate into acetyl-CoA (AcCoA), an essential intermediate at the junction of anabolic and catabolic pathways. AcsA undergoes a two-step reaction. In the first half reaction, AcsA combines acetate with ATP to form acetyl-adenylate (AcAMP) intermediate. In the second half reaction, it can then transfer the acetyl group from AcAMP to the sulfhydryl group of CoA, forming the product AcCoA. This chain is Acetyl-coenzyme A synthetase, found in Herminiimonas arsenicoxydans.